The chain runs to 272 residues: Phosphate import ATP-binding protein PstB (272 aa).

Residues 26 to 267 (LEIRNLDLRY…PKKRKTEDYI (242 aa)) form the ABC transporter domain. 58–65 (GPSGCGKS) is an ATP binding site.

Belongs to the ABC transporter superfamily. Phosphate importer (TC 3.A.1.7) family. In terms of assembly, the complex is composed of two ATP-binding proteins (PstB), two transmembrane proteins (PstC and PstA) and a solute-binding protein (PstS).

It localises to the cell inner membrane. The catalysed reaction is phosphate(out) + ATP + H2O = ADP + 2 phosphate(in) + H(+). Its function is as follows. Part of the ABC transporter complex PstSACB involved in phosphate import. Responsible for energy coupling to the transport system. The polypeptide is Phosphate import ATP-binding protein PstB (Shewanella frigidimarina (strain NCIMB 400)).